The sequence spans 355 residues: BAG family molecular chaperone regulator 1 (355 aa).

Positions 1-112 (MAGRSAARRP…KNVTGTQVEE (112 aa)) are disordered. The span at 26–39 (PAREPRQSESRAER) shows a compositional bias: basic and acidic residues. Polar residues-rich tracts occupy residues 80-91 (SSQSEKVGSSSR) and 102-111 (SKNVTGTQVE). 7 repeat units span residues 103-108 (KNVTGT), 111-116 (EEVTKI), 117-122 (EEATQT), 123-128 (EEVTVA), 129-134 (EEVTQT), 141-146 (EEMVQT), and 147-152 (EEMETP). The segment at 111–209 (EEVTKIEEAT…LIFKGKSLKE (99 aa)) is 7 X 6 AA tandem repeat of E-E-X(4). The disordered stretch occupies residues 132–151 (TQTDNMAKTEEMVQTEEMET). In terms of domain architecture, Ubiquitin-like spans 154-234 (LSVIVTHSNE…VMLIGEKSNP (81 aa)). The segment at 182 to 229 (DLAQLVEEATGVPLPFQKLIFKGKSLKEMETPLSALGMQNGCRVMLIG) is interaction with HSPA8. An interaction with PPP1R15A region spans residues 226-355 (MLIGEKSNPE…LQSTNLALAE (130 aa)). The BAG domain maps to 256-336 (HLQELNKELS…VFLAECDTVE (81 aa)).

As to quaternary structure, homodimer. Forms a heteromeric complex with HSP70/HSC70. Binds to the ATPase domain of HSP/HSC70 chaperones. Interacts with NR3C1. Interacts with the N-terminal region of MAPRE2. Interacts with PPP1R15A. Interacts with BCL2 in an ATP-dependent manner. Interacts with SIAH1, HSPA8 (via NBD), HSPA1A (via NBD) and HSPA1B (via NBD). Interacts with SIAH2. Interacts with ESR1; the interaction is promoted in the absence of estradiol (17-beta-estradiol/E2). In terms of processing, ubiquitinated; mediated by SIAH1 or SIAH2 and leading to its subsequent proteasomal degradation. In terms of tissue distribution, isoform 2 is expressed in the heart, lung, kidney and spinal cord. Isoform 1 and isoform 2 are expressed in hematopoietic cell lines. The levels of isoform 2 are relatively constant in all the cell lines examined while the levels of isoform 1 are more variable (at protein level). Isoform 1 is expressed in the lung and kidney. Isoform 2 is expressed in various tissues, with highest levels in testis and stomach.

It is found in the nucleus. Its subcellular location is the cytoplasm. Co-chaperone for HSP70 and HSC70 chaperone proteins. Acts as a nucleotide-exchange factor (NEF) promoting the release of ADP from the HSP70 and HSC70 proteins thereby triggering client/substrate protein release. Nucleotide release is mediated via its binding to the nucleotide-binding domain (NBD) of HSPA8/HSC70 where as the substrate release is mediated via its binding to the substrate-binding domain (SBD) of HSPA8/HSC70. Inhibits the pro-apoptotic function of PPP1R15A, and has anti-apoptotic activity. Markedly increases the anti-cell death function of BCL2 induced by various stimuli. Involved in the STUB1-mediated proteasomal degradation of ESR1 in response to age-related circulating estradiol (17-beta-estradiol/E2) decline, thereby promotes neuronal apoptosis in response to ischemic reperfusion injury. This chain is BAG family molecular chaperone regulator 1 (Bag1), found in Mus musculus (Mouse).